Reading from the N-terminus, the 631-residue chain is Phosphomethylpyrimidine synthase (631 aa).

Residues asparagine 239, methionine 268, tyrosine 297, histidine 333, 353–355 (SRG), 394–397 (DGLR), and glutamate 433 each bind substrate. Position 437 (histidine 437) interacts with Zn(2+). Position 460 (tyrosine 460) interacts with substrate. A Zn(2+)-binding site is contributed by histidine 501. Positions 581, 584, and 589 each coordinate [4Fe-4S] cluster.

The protein belongs to the ThiC family. In terms of assembly, homodimer. [4Fe-4S] cluster is required as a cofactor.

The enzyme catalyses 5-amino-1-(5-phospho-beta-D-ribosyl)imidazole + S-adenosyl-L-methionine = 4-amino-2-methyl-5-(phosphooxymethyl)pyrimidine + CO + 5'-deoxyadenosine + formate + L-methionine + 3 H(+). The protein operates within cofactor biosynthesis; thiamine diphosphate biosynthesis. Its function is as follows. Catalyzes the synthesis of the hydroxymethylpyrimidine phosphate (HMP-P) moiety of thiamine from aminoimidazole ribotide (AIR) in a radical S-adenosyl-L-methionine (SAM)-dependent reaction. This chain is Phosphomethylpyrimidine synthase, found in Escherichia coli O6:K15:H31 (strain 536 / UPEC).